A 968-amino-acid chain; its full sequence is Isoleucine--tRNA ligase (968 aa).

Positions 68-78 (PYANGALHMGH) match the 'HIGH' region motif. Residue E582 coordinates L-isoleucyl-5'-AMP. A 'KMSKS' region motif is present at residues 623-627 (KMSKS). K626 provides a ligand contact to ATP. 4 residues coordinate Zn(2+): C936, C939, C956, and C959.

This sequence belongs to the class-I aminoacyl-tRNA synthetase family. IleS type 1 subfamily. Monomer. Requires Zn(2+) as cofactor.

It localises to the cytoplasm. It carries out the reaction tRNA(Ile) + L-isoleucine + ATP = L-isoleucyl-tRNA(Ile) + AMP + diphosphate. In terms of biological role, catalyzes the attachment of isoleucine to tRNA(Ile). As IleRS can inadvertently accommodate and process structurally similar amino acids such as valine, to avoid such errors it has two additional distinct tRNA(Ile)-dependent editing activities. One activity is designated as 'pretransfer' editing and involves the hydrolysis of activated Val-AMP. The other activity is designated 'posttransfer' editing and involves deacylation of mischarged Val-tRNA(Ile). The protein is Isoleucine--tRNA ligase of Prochlorococcus marinus (strain MIT 9312).